The chain runs to 329 residues: Probable nicotianamine synthase 4 (329 aa).

The protein belongs to the nicotianamine synthase (NAS)-like family.

The enzyme catalyses 3 S-adenosyl-L-methionine = nicotianamine + 3 S-methyl-5'-thioadenosine + 3 H(+). Functionally, synthesizes nicotianamine, a polyamine that is the first intermediate in the synthesis of the phytosiderophores of the mugineic acid type found in gramineae which serves as a sensor for the physiological iron status within the plant, and/or might be involved in the transport of iron. This is Probable nicotianamine synthase 4 (NAS4) from Hordeum vulgare (Barley).